Consider the following 224-residue polypeptide: Pleckstrin homology domain-containing family B member 2 (224 aa).

One can recognise a PH domain in the interval 2-109 (AFVKSGWLLR…WKIALQDART (108 aa)). Lys20 contributes to the a 1,2-diacyl-sn-glycero-3-phospho-L-serine binding site.

The protein localises to the recycling endosome membrane. In terms of biological role, involved in retrograde transport of recycling endosomes. This Gallus gallus (Chicken) protein is Pleckstrin homology domain-containing family B member 2 (PLEKHB2).